Reading from the N-terminus, the 410-residue chain is F-box/WD repeat-containing protein 4 (410 aa).

Residues 23–69 enclose the F-box domain; sequence GPALWRLPEELLLLICSYLDTRALGRLAQVCRWLRRFTSCDLLWRPI. 4 WD repeats span residues 159-196, 198-235, 289-327, and 333-372; these read GHDEDVCHFVLANSHIVSAGGDGKIGVHKIHSTFTVKY, AHEQEVNCVDCKGGIIVSGSRDRTAKVWPLASGRLGQC, PPGAGVLDVMYESPSTLLSCGYDTYVRYWDLRTSTRKCV, and PHDSTFYCLQTDGNHLLATGSSYYGLVRLWDRRQRACLHA.

In terms of assembly, part of a SCF (SKP1-cullin-F-box) protein ligase complex. Interacts with POUF51.

In terms of biological role, probably recognizes and binds to some phosphorylated proteins and promotes their ubiquitination and degradation. Likely to be involved in key signaling pathways crucial for normal limb development. May participate in Wnt signaling. This is F-box/WD repeat-containing protein 4 (Fbxw4) from Mus musculus (Mouse).